We begin with the raw amino-acid sequence, 459 residues long: Carbonic anhydrase 9 (459 aa).

The signal sequence occupies residues 1-37 (MAPLCPSPWLPLLIPAPAPGLTVQLLLSLLLLVPVHP). The interval 38-112 (QRLPRMQEDS…EEEGSLKLED (75 aa)) is proteoglycan-like (PG). Over 38-414 (QRLPRMQEDS…QLNSCLAAGD (377 aa)) the chain is Extracellular. Residues 42-154 (RMQEDSPLGG…GDPPWPRVSP (113 aa)) form a disordered region. Residues 55 to 95 (GEDDPLGEEDLPSEEDSPREEDPPGEEDLPGEEDLPGEEDL) show a composition bias toward acidic residues. Residues 96–112 (PEVKPKSEEEGSLKLED) are compositionally biased toward basic and acidic residues. O-linked (GlcNAc...) threonine glycosylation occurs at T115. The span at 129 to 140 (AHRDKEGDDQSH) shows a compositional bias: basic and acidic residues. The segment at 138 to 391 (QSHWRYGGDP…NGRVIEASFP (254 aa)) is catalytic. An Alpha-carbonic anhydrase domain is found at 139–390 (SHWRYGGDPP…LNGRVIEASF (252 aa)). The cysteines at positions 156 and 336 are disulfide-linked. Residue H200 is the Proton donor/acceptor of the active site. 3 residues coordinate Zn(2+): H226, H228, and H251. Position 332 to 333 (332 to 333 (TT)) interacts with substrate. N346 carries N-linked (GlcNAc...) asparagine glycosylation. The chain crosses the membrane as a helical span at residues 415–435 (ILALVFGLLFAVTSVAFLVQM). Topologically, residues 436 to 459 (RRQHRRGTKGGVSYRPAEVAETGA) are cytoplasmic. Y449 carries the phosphotyrosine modification.

This sequence belongs to the alpha-carbonic anhydrase family. Forms oligomers linked by disulfide bonds. Zn(2+) serves as cofactor. In terms of processing, asn-346 bears high-mannose type glycan structures. In terms of tissue distribution, expressed primarily in carcinoma cells lines. Expression is restricted to very few normal tissues and the most abundant expression is found in the epithelial cells of gastric mucosa.

Its subcellular location is the nucleus. It localises to the nucleolus. It is found in the cell membrane. The protein resides in the cell projection. The protein localises to the microvillus membrane. It catalyses the reaction hydrogencarbonate + H(+) = CO2 + H2O. Inhibited by coumarins, saccharin, sulfonamide derivatives such as acetazolamide (AZA) and Foscarnet (phosphonoformate trisodium salt). Functionally, catalyzes the interconversion between carbon dioxide and water and the dissociated ions of carbonic acid (i.e. bicarbonate and hydrogen ions). This is Carbonic anhydrase 9 (CA9) from Homo sapiens (Human).